The following is a 185-amino-acid chain: Ribosome-recycling factor (185 aa).

This sequence belongs to the RRF family.

Its subcellular location is the cytoplasm. Its function is as follows. Responsible for the release of ribosomes from messenger RNA at the termination of protein biosynthesis. May increase the efficiency of translation by recycling ribosomes from one round of translation to another. This is Ribosome-recycling factor from Frankia alni (strain DSM 45986 / CECT 9034 / ACN14a).